Here is a 256-residue protein sequence, read N- to C-terminus: 5'-nucleotidase SurE (256 aa).

The a divalent metal cation site is built by aspartate 9, aspartate 10, serine 40, and asparagine 94.

This sequence belongs to the SurE nucleotidase family. The cofactor is a divalent metal cation.

It localises to the cytoplasm. The catalysed reaction is a ribonucleoside 5'-phosphate + H2O = a ribonucleoside + phosphate. In terms of biological role, nucleotidase that shows phosphatase activity on nucleoside 5'-monophosphates. The polypeptide is 5'-nucleotidase SurE (Campylobacter fetus subsp. fetus (strain 82-40)).